A 411-amino-acid chain; its full sequence is Citrate synthase (411 aa).

Active-site residues include H304 and D363.

It belongs to the citrate synthase family.

The catalysed reaction is oxaloacetate + acetyl-CoA + H2O = citrate + CoA + H(+). The protein operates within carbohydrate metabolism; tricarboxylic acid cycle; isocitrate from oxaloacetate: step 1/2. The polypeptide is Citrate synthase (gltA) (Rickettsia helvetica).